A 273-amino-acid chain; its full sequence is Dermonecrotic toxin LhSicTox-alphaIA2ai (273 aa).

His5 is an active-site residue. The Mg(2+) site is built by Glu25 and Asp27. His41 acts as the Nucleophile in catalysis. Intrachain disulfides connect Cys45/Cys51 and Cys47/Cys190. Residue Asp85 participates in Mg(2+) binding.

Belongs to the arthropod phospholipase D family. Class II subfamily. It depends on Mg(2+) as a cofactor. Expressed by the venom gland.

The protein localises to the secreted. It catalyses the reaction an N-(acyl)-sphingosylphosphocholine = an N-(acyl)-sphingosyl-1,3-cyclic phosphate + choline. The catalysed reaction is an N-(acyl)-sphingosylphosphoethanolamine = an N-(acyl)-sphingosyl-1,3-cyclic phosphate + ethanolamine. The enzyme catalyses a 1-acyl-sn-glycero-3-phosphocholine = a 1-acyl-sn-glycero-2,3-cyclic phosphate + choline. It carries out the reaction a 1-acyl-sn-glycero-3-phosphoethanolamine = a 1-acyl-sn-glycero-2,3-cyclic phosphate + ethanolamine. Its function is as follows. Dermonecrotic toxins cleave the phosphodiester linkage between the phosphate and headgroup of certain phospholipids (sphingolipid and lysolipid substrates), forming an alcohol (often choline) and a cyclic phosphate. This toxin acts on sphingomyelin (SM). It may also act on ceramide phosphoethanolamine (CPE), lysophosphatidylcholine (LPC) and lysophosphatidylethanolamine (LPE), but not on lysophosphatidylserine (LPS), and lysophosphatidylglycerol (LPG). It acts by transphosphatidylation, releasing exclusively cyclic phosphate products as second products. Induces dermonecrosis, hemolysis, increased vascular permeability, edema, inflammatory response, and platelet aggregation. In Loxosceles hirsuta (Recluse spider), this protein is Dermonecrotic toxin LhSicTox-alphaIA2ai.